Reading from the N-terminus, the 382-residue chain is MQLLHISDTHLGKRQYNLESREKDVYDTFTQLIDIAINEHVKAVIHTGDLFDVNNPPNRAKLHAIKELKRLKDHNIPFICIAGDHDSPKRKEEIYPQRILEEFNLIKILQKIDNRVKLENVEVYGISHISNVSVNDLKEQLSKVKPETRKSILMLHQGIRTYLPYQGAWQIELSDLPKGFSLYAVGHLHSRRKDYLDGGALIEIAGSPDIMREEEIEDYQKSKKGATLIDMSGDLPSINYINVNIRDQLVLDINVDKIEQSIESVIQKLKENVKNDKKPILHIELEGTVPIRKDVLMTKLQALRDYVEHYRIYKNNIVSIKEENLKTKLKTTYSSLNDIIADYLKGIGYTDEETKIIIDIINEEDEKKVEELLKKFAGVEDK.

Residues Asp8, His10, Asp49, and Asp84 each coordinate Mn(2+). His85 functions as the Proton donor in the catalytic mechanism. Mn(2+) contacts are provided by His156, His187, and His189.

This sequence belongs to the MRE11/RAD32 family. Homodimer. Forms a heterotetramer composed of two Mre11 subunits and two Rad50 subunits. Interacts with Rad50 and HerA. The cofactor is Mn(2+).

With respect to regulation, nuclease activity is regulated by Rad50. Its function is as follows. Part of the Rad50/Mre11 complex, which is involved in the early steps of DNA double-strand break (DSB) repair. The complex may facilitate opening of the processed DNA ends to aid in the recruitment of HerA and NurA. Mre11 binds to DSB ends and has both double-stranded 3'-5' exonuclease activity and single-stranded endonuclease activity. Recruited immediately to chromosomal DNA after gamma irradiation, and remains DNA bound in the course of DNA repair. The sequence is that of DNA double-strand break repair protein Mre11 from Sulfolobus acidocaldarius (strain ATCC 33909 / DSM 639 / JCM 8929 / NBRC 15157 / NCIMB 11770).